Reading from the N-terminus, the 132-residue chain is Small ribosomal subunit protein uS8 (132 aa).

It belongs to the universal ribosomal protein uS8 family. In terms of assembly, part of the 30S ribosomal subunit. Contacts proteins S5 and S12.

Its function is as follows. One of the primary rRNA binding proteins, it binds directly to 16S rRNA central domain where it helps coordinate assembly of the platform of the 30S subunit. The polypeptide is Small ribosomal subunit protein uS8 (Borrelia garinii subsp. bavariensis (strain ATCC BAA-2496 / DSM 23469 / PBi) (Borreliella bavariensis)).